The sequence spans 498 residues: Guanosine-5'-triphosphate,3'-diphosphate pyrophosphatase (498 aa).

This sequence belongs to the GppA/Ppx family. GppA subfamily.

The enzyme catalyses guanosine 3'-diphosphate 5'-triphosphate + H2O = guanosine 3',5'-bis(diphosphate) + phosphate + H(+). Its pathway is purine metabolism; ppGpp biosynthesis; ppGpp from GTP: step 2/2. In terms of biological role, catalyzes the conversion of pppGpp to ppGpp. Guanosine pentaphosphate (pppGpp) is a cytoplasmic signaling molecule which together with ppGpp controls the 'stringent response', an adaptive process that allows bacteria to respond to amino acid starvation, resulting in the coordinated regulation of numerous cellular activities. The protein is Guanosine-5'-triphosphate,3'-diphosphate pyrophosphatase of Serratia proteamaculans (strain 568).